A 566-amino-acid polypeptide reads, in one-letter code: Acetyl-coenzyme A carboxylase carboxyl transferase subunits beta/alpha (566 aa).

The interval 1–243 (MNPTTPRGGQ…QTAEFLLRHG (243 aa)) is acetyl-coenzyme A carboxylase carboxyl transferase subunit beta. In terms of domain architecture, CoA carboxyltransferase N-terminal spans 11-280 (LWSRCGGCAS…PVGAGHESEC (270 aa)). The segment at 11–534 (LWSRCGGCAS…REAVLAHLVP (524 aa)) is carboxyltransferase. Zn(2+)-binding residues include Cys15, Cys18, Cys34, and Cys37. The tract at residues 244-557 (QVDLVVPRHA…RRRFRRFGAA (314 aa)) is acetyl-coenzyme A carboxylase carboxyl transferase subunit alpha. The disordered stretch occupies residues 268-295 (GREPVGAGHESECPPVDGSSTQERGADK). Residues 282-534 (PVDGSSTQER…REAVLAHLVP (253 aa)) form the CoA carboxyltransferase C-terminal domain.

In the N-terminal section; belongs to the AccD/PCCB family. The protein in the C-terminal section; belongs to the AccA family. As to quaternary structure, acetyl-CoA carboxylase is a heterotetramer composed of biotin carboxyl carrier protein (AccB), biotin carboxylase (AccC) and two subunits of ACCase subunit beta/alpha. Requires Zn(2+) as cofactor.

It is found in the cytoplasm. The catalysed reaction is N(6)-carboxybiotinyl-L-lysyl-[protein] + acetyl-CoA = N(6)-biotinyl-L-lysyl-[protein] + malonyl-CoA. The protein operates within lipid metabolism; malonyl-CoA biosynthesis; malonyl-CoA from acetyl-CoA: step 1/1. Functionally, component of the acetyl coenzyme A carboxylase (ACC) complex. Biotin carboxylase (BC) catalyzes the carboxylation of biotin on its carrier protein (BCCP) and then the CO(2) group is transferred by the transcarboxylase to acetyl-CoA to form malonyl-CoA. The polypeptide is Acetyl-coenzyme A carboxylase carboxyl transferase subunits beta/alpha (accD) (Salinispora tropica (strain ATCC BAA-916 / DSM 44818 / JCM 13857 / NBRC 105044 / CNB-440)).